Reading from the N-terminus, the 585-residue chain is CTP synthase (585 aa).

The segment at 1-281 (MPALRKHPHT…DAYVVRRLNL (281 aa)) is amidoligase domain. Serine 23 serves as a coordination point for CTP. Serine 23 is a binding site for UTP. Residues 24-29 (SLGKGL) and aspartate 81 each bind ATP. Mg(2+) contacts are provided by aspartate 81 and glutamate 155. CTP-binding positions include 162–164 (DIE), 202–207 (KTKPTQ), and lysine 238. UTP contacts are provided by residues 202–207 (KTKPTQ) and lysine 238. Positions 306 to 554 (RIALVGKYID…VGAAVEYNNG (249 aa)) constitute a Glutamine amidotransferase type-1 domain. Glycine 369 is a binding site for L-glutamine. Cysteine 396 (nucleophile; for glutamine hydrolysis) is an active-site residue. L-glutamine contacts are provided by residues 397 to 400 (LGLQ), glutamate 419, and arginine 480. Active-site residues include histidine 527 and glutamate 529. Residues 564 to 585 (IPTADHQSNGAEHALEDAPARG) form a disordered region. Over residues 576-585 (HALEDAPARG) the composition is skewed to basic and acidic residues.

This sequence belongs to the CTP synthase family. In terms of assembly, homotetramer.

The enzyme catalyses UTP + L-glutamine + ATP + H2O = CTP + L-glutamate + ADP + phosphate + 2 H(+). It carries out the reaction L-glutamine + H2O = L-glutamate + NH4(+). It catalyses the reaction UTP + NH4(+) + ATP = CTP + ADP + phosphate + 2 H(+). Its pathway is pyrimidine metabolism; CTP biosynthesis via de novo pathway; CTP from UDP: step 2/2. Its activity is regulated as follows. Allosterically activated by GTP, when glutamine is the substrate; GTP has no effect on the reaction when ammonia is the substrate. The allosteric effector GTP functions by stabilizing the protein conformation that binds the tetrahedral intermediate(s) formed during glutamine hydrolysis. Inhibited by the product CTP, via allosteric rather than competitive inhibition. Functionally, catalyzes the ATP-dependent amination of UTP to CTP with either L-glutamine or ammonia as the source of nitrogen. Regulates intracellular CTP levels through interactions with the four ribonucleotide triphosphates. The sequence is that of CTP synthase from Mycolicibacterium gilvum (strain PYR-GCK) (Mycobacterium gilvum (strain PYR-GCK)).